An 892-amino-acid chain; its full sequence is NACHT, LRR and PYD domains-containing protein 6 (892 aa).

Positions 1–103 (MDQPEAPCSS…AAQLQERRLQ (103 aa)) constitute a Pyrin domain. The disordered stretch occupies residues 158–181 (APEEAMGPAEEPEPGRARRSDTHT). The segment covering 170 to 181 (EPGRARRSDTHT) has biased composition (basic and acidic residues). Residues 196-513 (LTVVLQGPAG…EFLAALSYLL (318 aa)) form the NACHT domain. 202–209 (GPAGIGKT) is an ATP binding site. Residues 352-356 (KDKKK) form a disordered region. One copy of the LRR 1 repeat lies at 462-487 (EKELEQLELRGSKVQTLFLSKKELPG). Positions 590–614 (APEVTEGAKGLEDTEEPEEEEEGEE) are disordered. Acidic residues predominate over residues 602–614 (DTEEPEEEEEGEE). LRR repeat units lie at residues 727–747 (LCHLSSLTLSHCKLPDAVCRD), 755–778 (APALTELGLLHNRLSEAGLRMLSE), 811–834 (SPALTTLDLSGCQLPAPMVTYLCA), and 845–868 (TLSLASVELSEQSLQELQAVKRAK).

The protein belongs to the NLRP family. In terms of assembly, homomultimer; forms the NLRP6 inflammasome polymeric complex, a filament composed of homopolymers in response to pathogens and other damage-associated signals. The core of NLRP6 inflammasomes consists of a signal sensor component (NLRP6), an adapter (PYCARD/ASC), which recruits effector pro-inflammatory caspases (CASP1 and CASP4). Interacts (via pyrin domain) with PYCARD/ASC (via pyrin domain); interaction takes place following NLRP6 activation and formation of liquid-liquid phase separation (LLPS), initiating nucleation which greatly enhances further addition of soluble PYCARD/ASC molecules to the speck in a prion-like polymerization process. Clustered PYCARD/ASC nucleates the formation of CASP1 (or possibly CASP4) filaments through the interaction of their respective CARD domains, acting as a platform for CASP1 polymerization. CASP1 filament formation increases local enzyme concentration, resulting in trans-autocleavage and activation. Active CASP1 then processes IL1B and IL18 precursors, leading to the release of mature cytokines in the extracellular milieu and inflammatory response. Interacts with DHX15. In terms of processing, polyubiquitinated with 'Lys-63'-linked chains, promoting the interaction with PYCARD/ASC and formation of the NLRP6 inflammasome. Deubiquitination by CYLD decreases the interaction with PYCARD/ASC. As to expression, expressed in peripheral blood leukocytes, predominantly in granulocytes and, at lower levels, in CD4(+) and CD8(+) T-cells. Expressed in colonic myofibroblasts (at protein level).

It is found in the cytoplasm. It localises to the cytosol. The protein resides in the inflammasome. The protein localises to the cell membrane. Its subcellular location is the nucleus membrane. Acts as the sensor component of the NLRP6 inflammasome, which mediates inflammasome activation in response to various pathogen-associated signals, leading to maturation and secretion of IL1B and IL18. Inflammasomes are supramolecular complexes that assemble in the cytosol in response to pathogens and other damage-associated signals and play critical roles in innate immunity and inflammation. Acts as a recognition receptor (PRR): recognizes and binds specific pathogens and other damage-associated signals, such as lipoteichoic acid (LTA), a cell-wall component of Gram-positive bacteria, or double stranded RNA (dsRNA). May also recognize and bind lipopolysaccharide (LPS), a major component of the outer membrane of Gram-negative bacteria; however, LPS is probably not a major activator of the NLRP6 inflammasome. Following LTA- or dsRNA-binding, NLRP6 undergoes liquid-liquid phase separation (LLPS), enhancing multivalent interactions, an essential step for the formation of the NLRP6 inflammasome polymeric complex. The NLRP6 inflammasome acts by promoting recruitment of effector pro-inflammatory caspases (CASP1 and/or CASP4) that catalyze maturation and secretion of IL1B and IL18 in the extracellular milieu. The NLRP6 inflammasome plays a central role in the maintenance of epithelial integrity and host defense against microbial infections in the intestine. Required to restrict infection against Gram-positive bacteria by recognizing lipoteichoic acid (LTA), leading to recruitment of CASP4 and CASP1, and subsequent maturation and secretion of IL1B and IL18. Involved in intestinal antiviral innate immunity together with DHX15: recognizes and binds viral dsRNA to restrict infection by enteric viruses through the interferon pathway and GSDMD-dependent release of IL18. Required to prevent infection by the apicomplexan parasite Cryptosporidium in enterocytes by promoting GSDMD-dependent release of IL18. The NLRP6 inflammasome may also regulate the gut microbiota composition by acting as a sensor of microbiota-associated metabolites to form a PYCARD/ASC-dependent inflammasome for downstream IL18 release and secretion of antimicrobial peptides. Essential for gut mucosal self-renewal and proliferation. Regulate mucus secretion in an inflammasome- and autophagy-dependent manner to prevent invasion by enteric bacteria,. During systemic bacterial infections, the NLRP6 inflammasome negatively regulates neutrophil recruitment and neutrophil extracellular traps (NETs) formation. May promote peripheral nerve recovery following injury via an inflammasome-independent mechanism. This is NACHT, LRR and PYD domains-containing protein 6 from Homo sapiens (Human).